The chain runs to 265 residues: 4-hydroxy-tetrahydrodipicolinate reductase (265 aa).

9–14 (GPRGRM) provides a ligand contact to NAD(+). NADP(+) is bound at residue K37. Residues 99–101 (GTT) and 125–128 (APNF) each bind NAD(+). The active-site Proton donor/acceptor is the H155. H156 is a binding site for (S)-2,3,4,5-tetrahydrodipicolinate. The Proton donor role is filled by K159. 165–166 (GT) contributes to the (S)-2,3,4,5-tetrahydrodipicolinate binding site. The span at 178-190 (RESQKQGHPKEEE) shows a compositional bias: basic and acidic residues. Residues 178-200 (RESQKQGHPKEEETLPGARGADM) are disordered.

It belongs to the DapB family.

Its subcellular location is the cytoplasm. It catalyses the reaction (S)-2,3,4,5-tetrahydrodipicolinate + NAD(+) + H2O = (2S,4S)-4-hydroxy-2,3,4,5-tetrahydrodipicolinate + NADH + H(+). The catalysed reaction is (S)-2,3,4,5-tetrahydrodipicolinate + NADP(+) + H2O = (2S,4S)-4-hydroxy-2,3,4,5-tetrahydrodipicolinate + NADPH + H(+). Its pathway is amino-acid biosynthesis; L-lysine biosynthesis via DAP pathway; (S)-tetrahydrodipicolinate from L-aspartate: step 4/4. Its function is as follows. Catalyzes the conversion of 4-hydroxy-tetrahydrodipicolinate (HTPA) to tetrahydrodipicolinate. This chain is 4-hydroxy-tetrahydrodipicolinate reductase, found in Oceanobacillus iheyensis (strain DSM 14371 / CIP 107618 / JCM 11309 / KCTC 3954 / HTE831).